We begin with the raw amino-acid sequence, 275 residues long: Large ribosomal subunit protein uL2 (275 aa).

A disordered region spans residues 223-260 (VAMNPVDHPHGGGEGRTSGGRHPVSPWGLPTKGYKTRS).

This sequence belongs to the universal ribosomal protein uL2 family. As to quaternary structure, part of the 50S ribosomal subunit. Forms a bridge to the 30S subunit in the 70S ribosome.

One of the primary rRNA binding proteins. Required for association of the 30S and 50S subunits to form the 70S ribosome, for tRNA binding and peptide bond formation. It has been suggested to have peptidyltransferase activity; this is somewhat controversial. Makes several contacts with the 16S rRNA in the 70S ribosome. The chain is Large ribosomal subunit protein uL2 from Legionella pneumophila (strain Lens).